Consider the following 975-residue polypeptide: Glycine dehydrogenase (decarboxylating) (975 aa).

K702 bears the N6-(pyridoxal phosphate)lysine mark.

The protein belongs to the GcvP family. The glycine cleavage system is composed of four proteins: P, T, L and H. Pyridoxal 5'-phosphate serves as cofactor.

It carries out the reaction N(6)-[(R)-lipoyl]-L-lysyl-[glycine-cleavage complex H protein] + glycine + H(+) = N(6)-[(R)-S(8)-aminomethyldihydrolipoyl]-L-lysyl-[glycine-cleavage complex H protein] + CO2. The glycine cleavage system catalyzes the degradation of glycine. The P protein binds the alpha-amino group of glycine through its pyridoxal phosphate cofactor; CO(2) is released and the remaining methylamine moiety is then transferred to the lipoamide cofactor of the H protein. This chain is Glycine dehydrogenase (decarboxylating), found in Xanthomonas campestris pv. campestris (strain 8004).